The primary structure comprises 336 residues: Tetraacyldisaccharide 4'-kinase (336 aa).

60 to 67 (TVGGTGKT) is a binding site for ATP.

The protein belongs to the LpxK family.

The catalysed reaction is a lipid A disaccharide + ATP = a lipid IVA + ADP + H(+). Its pathway is glycolipid biosynthesis; lipid IV(A) biosynthesis; lipid IV(A) from (3R)-3-hydroxytetradecanoyl-[acyl-carrier-protein] and UDP-N-acetyl-alpha-D-glucosamine: step 6/6. Transfers the gamma-phosphate of ATP to the 4'-position of a tetraacyldisaccharide 1-phosphate intermediate (termed DS-1-P) to form tetraacyldisaccharide 1,4'-bis-phosphate (lipid IVA). This chain is Tetraacyldisaccharide 4'-kinase, found in Pseudomonas fluorescens (strain SBW25).